The primary structure comprises 112 residues: MAEHKSDFSTDLKKGDTVIVVAGKDKGKQGQILQVLGKKSSVLVEKVNMIKRHTKPAQNREGGIVEKEAPIHISNVMIVDPATGKATRIKKKNLEDGRKVRVAAGSGEVLDK.

It belongs to the universal ribosomal protein uL24 family. Part of the 50S ribosomal subunit.

Its function is as follows. One of two assembly initiator proteins, it binds directly to the 5'-end of the 23S rRNA, where it nucleates assembly of the 50S subunit. Functionally, one of the proteins that surrounds the polypeptide exit tunnel on the outside of the subunit. In Magnetococcus marinus (strain ATCC BAA-1437 / JCM 17883 / MC-1), this protein is Large ribosomal subunit protein uL24.